Here is a 244-residue protein sequence, read N- to C-terminus: 1-(5-phosphoribosyl)-5-[(5-phosphoribosylamino)methylideneamino] imidazole-4-carboxamide isomerase (244 aa).

Asp10 serves as the catalytic Proton acceptor. Asp132 (proton donor) is an active-site residue.

Belongs to the HisA/HisF family.

It localises to the cytoplasm. It carries out the reaction 1-(5-phospho-beta-D-ribosyl)-5-[(5-phospho-beta-D-ribosylamino)methylideneamino]imidazole-4-carboxamide = 5-[(5-phospho-1-deoxy-D-ribulos-1-ylimino)methylamino]-1-(5-phospho-beta-D-ribosyl)imidazole-4-carboxamide. It participates in amino-acid biosynthesis; L-histidine biosynthesis; L-histidine from 5-phospho-alpha-D-ribose 1-diphosphate: step 4/9. The sequence is that of 1-(5-phosphoribosyl)-5-[(5-phosphoribosylamino)methylideneamino] imidazole-4-carboxamide isomerase from Stenotrophomonas maltophilia (strain R551-3).